The chain runs to 264 residues: Apolipoprotein A-I (264 aa).

The signal sequence occupies residues 1–18; it reads MKAVVLAVAVLFLTGSQA. A run of 2 repeats spans residues 67-88 and 89-110. The interval 67–264 is 10 X approximate tandem repeats; it reads LKLLDNWDTL…DQATKQLTAQ (198 aa). Residue M109 is modified to Methionine sulfoxide. Residues 111-121 form a 3; half-length repeat; that stretch reads KDLQEVKQKVQ. Repeat copies occupy residues 122-143, 144-165, 166-187, 188-207, and 208-229. The 9; half-length repeat unit spans residues 230–240; the sequence is PALEDLRQGLL. Residues 241-264 form repeat 10; that stretch reads PVLESLKASILSSIDQATKQLTAQ.

Belongs to the apolipoprotein A1/A4/E family. In terms of assembly, homodimer. Interacts with APOA1BP and CLU. Component of a sperm activating protein complex (SPAP), consisting of APOA1, an immunoglobulin heavy chain, an immunoglobulin light chain and albumin. Interacts with NDRG1. Interacts with SCGB3A2. Interacts with NAXE and YJEFN3. Glycosylated. Post-translationally, palmitoylated. In terms of processing, phosphorylation sites are present in the extracellular medium.

The protein resides in the secreted. Its function is as follows. Participates in the reverse transport of cholesterol from tissues to the liver for excretion by promoting cholesterol efflux from tissues and by acting as a cofactor for the lecithin cholesterol acyltransferase (LCAT). As part of the SPAP complex, activates spermatozoa motility. The polypeptide is Apolipoprotein A-I (APOA1) (Chinchilla lanigera (Long-tailed chinchilla)).